A 512-amino-acid polypeptide reads, in one-letter code: Apolipoprotein N-acyltransferase (512 aa).

6 helical membrane passes run 5–25 (LDKYWQHPALYWPLLILFAAA), 56–76 (FAVSSAYLFGLTAYTTQFYWI), 92–112 (VPLTFLLPAYLALYPALCFWL), 118–138 (LPRGIKIGLVLPILWTLTEFA), 168–188 (LGGIHMVTLATAFLGVWLVLA), and 195–215 (SGKRLLPIILIAALLAAGYTA). Residues 233-477 (LQGNIDQTLK…ETVLEGHIKG (245 aa)) enclose the CN hydrolase domain. Glu-271 acts as the Proton acceptor in catalysis. Residue Lys-337 is part of the active site. The active-site Nucleophile is Cys-389. A helical transmembrane segment spans residues 487-507 (TGSSWWLMGILALAALILFIF).

Belongs to the CN hydrolase family. Apolipoprotein N-acyltransferase subfamily.

It localises to the cell inner membrane. It catalyses the reaction N-terminal S-1,2-diacyl-sn-glyceryl-L-cysteinyl-[lipoprotein] + a glycerophospholipid = N-acyl-S-1,2-diacyl-sn-glyceryl-L-cysteinyl-[lipoprotein] + a 2-acyl-sn-glycero-3-phospholipid + H(+). The protein operates within protein modification; lipoprotein biosynthesis (N-acyl transfer). In terms of biological role, catalyzes the phospholipid dependent N-acylation of the N-terminal cysteine of apolipoprotein, the last step in lipoprotein maturation. The chain is Apolipoprotein N-acyltransferase from Neisseria meningitidis serogroup B (strain ATCC BAA-335 / MC58).